We begin with the raw amino-acid sequence, 91 residues long: Small ribosomal subunit protein bS20 (91 aa).

The segment covering 1–21 (MPLHKSAEKRLRQSARRNERN) has biased composition (basic and acidic residues). Disordered regions lie at residues 1 to 25 (MPLHKSAEKRLRQSARRNERNRARK) and 70 to 91 (PNKASRKKSQLSRMLNNYMKAE). The span at 70-79 (PNKASRKKSQ) shows a compositional bias: basic residues.

The protein belongs to the bacterial ribosomal protein bS20 family.

Its function is as follows. Binds directly to 16S ribosomal RNA. This is Small ribosomal subunit protein bS20 from Chlorobium phaeobacteroides (strain BS1).